The sequence spans 464 residues: Cysteine--tRNA ligase (464 aa).

A Zn(2+)-binding site is contributed by Cys-28. Positions 30-40 (VTVYDFCHIGH) match the 'HIGH' region motif. Residues Cys-209, His-234, and Glu-238 each coordinate Zn(2+). Residues 266-270 (KMSKS) carry the 'KMSKS' region motif. Lys-269 provides a ligand contact to ATP.

It belongs to the class-I aminoacyl-tRNA synthetase family. Monomer. Zn(2+) serves as cofactor.

The protein localises to the cytoplasm. The catalysed reaction is tRNA(Cys) + L-cysteine + ATP = L-cysteinyl-tRNA(Cys) + AMP + diphosphate. The sequence is that of Cysteine--tRNA ligase (cysS) from Buchnera aphidicola subsp. Acyrthosiphon pisum (strain APS) (Acyrthosiphon pisum symbiotic bacterium).